Consider the following 428-residue polypeptide: MPIIEQVGAREILDSRGNPTVEVEVALIDGTFARAAVPSGASTGEHEAVELRDGGDRYGGKGVKKAVEAVLDEIGPAVIGLNADDQRLVDQALVDLDGTPDKSRLGGNSILGVSLAVAKAASESAELPLFRYIGGPNAHILPVPMMNILNGGAHADTGVDIQEFMVAPIGAPSFSEALRWGAEVYHALKAVLKKAGLSTGLGDEGGFAPDVASTTAALDLISQAIEAAGFKPGVDVALALDAAANEFHADGSYTFEGTPRTAAQMTEFYAGLLGSYPLVSIEDPLYENDWDGWAALTAEIGDRVQIVGDDVFVTNPERLEEGIDRGVANALLVKVNQIGTLTETLDAVALAHHSGYRTMISHRSGETEDTIIADLAVAVGSGQIKTGAPARSERVAKYNQLLRIEEALGDAARYAGDLAFPRFVADPK.

Q162 is a (2R)-2-phosphoglycerate binding site. The active-site Proton donor is the E204. Residues D241, E282, and D309 each contribute to the Mg(2+) site. Positions 334, 363, 364, and 385 each coordinate (2R)-2-phosphoglycerate. Residue K334 is the Proton acceptor of the active site.

The protein belongs to the enolase family. Requires Mg(2+) as cofactor.

The protein resides in the cytoplasm. It is found in the secreted. Its subcellular location is the cell surface. It catalyses the reaction (2R)-2-phosphoglycerate = phosphoenolpyruvate + H2O. It participates in carbohydrate degradation; glycolysis; pyruvate from D-glyceraldehyde 3-phosphate: step 4/5. Functionally, catalyzes the reversible conversion of 2-phosphoglycerate (2-PG) into phosphoenolpyruvate (PEP). It is essential for the degradation of carbohydrates via glycolysis. This Mycobacterium marinum (strain ATCC BAA-535 / M) protein is Enolase.